A 138-amino-acid chain; its full sequence is Large ribosomal subunit protein mL54 (138 aa).

Residues M1–W16 constitute a mitochondrion transit peptide.

This sequence belongs to the mitochondrion-specific ribosomal protein mL54 family. In terms of assembly, component of the mitochondrial ribosome large subunit (39S) which comprises a 16S rRNA and about 50 distinct proteins.

The protein localises to the mitochondrion. The sequence is that of Large ribosomal subunit protein mL54 (MRPL54) from Bos taurus (Bovine).